The sequence spans 471 residues: Elongation factor 1-alpha (471 aa).

The 230-residue stretch at 10 to 239 (KPRLNACFIG…EALNYQDVPE (230 aa)) folds into the tr-type G domain. The tract at residues 19–26 (GHVDSGKS) is G1. 19 to 26 (GHVDSGKS) contributes to the GTP binding site. Residues 75–79 (GITIT) are G2. A G3 region spans residues 96-99 (DCPG). Residues 96–100 (DCPGH) and 156–159 (NKMD) contribute to the GTP site. Residues 156 to 159 (NKMD) form a G4 region. Residues 196 to 198 (SAF) are G5.

It belongs to the TRAFAC class translation factor GTPase superfamily. Classic translation factor GTPase family. EF-Tu/EF-1A subfamily. In terms of assembly, component of the eukaryotic elongation factor 1 complex (eEF1).

It is found in the cytoplasm. The protein operates within protein biosynthesis; polypeptide chain elongation. In terms of biological role, GTP-binding component of the eukaryotic elongation factor 1 complex (eEF1). In its active GTP-bound form, binds to and delivers aminoacyl-tRNA to the A-site of ribosomes during protein biosynthesis. In the presence of a correct codon-anticodon match between the aminoacyl-tRNA and the A-site codon of the ribosome-bound mRNA, the ribosome acts as a GTPase activator and the GTP is hydrolyzed. The inactive GDP-bound form leaves the ribosome and must be recycled by its guanine nucleotide exchange factor (GEF) (eEF1B subcomplex) before binding another molecule of aminoacyl-tRNA. Required for nuclear export of aminoacyl-tRNAs. May also be involved in translational quality control by targeting cotranslationally damaged proteins to the proteasome. This chain is Elongation factor 1-alpha (TEF1), found in Encephalitozoon cuniculi (strain GB-M1) (Microsporidian parasite).